Here is a 351-residue protein sequence, read N- to C-terminus: uncharacterized protein (351 aa).

The first 27 residues, 1–27, serve as a signal peptide directing secretion; sequence MKNKKRVLIASSLSCAILLLSAATTQA. Residues 28–71 form a disordered region; that stretch reads NSAHKDSQDQNKKEHVDKSQQKDKRNVTNKDKNSTVPDDIGKNG. Positions 30–60 are enriched in basic and acidic residues; it reads AHKDSQDQNKKEHVDKSQQKDKRNVTNKDKN.

The protein belongs to the aerolysin family.

This is an uncharacterized protein from Staphylococcus aureus (strain N315).